Here is a 23-residue protein sequence, read N- to C-terminus: Glutamine synthetase (23 aa).

The protein belongs to the glutamine synthetase family. Oligomer of 12 subunits arranged in the form of two hexagons. The cofactor is Mg(2+).

The protein resides in the cytoplasm. It carries out the reaction L-glutamate + NH4(+) + ATP = L-glutamine + ADP + phosphate + H(+). The activity of this enzyme could be controlled by adenylation under conditions of abundant glutamine. Its function is as follows. Involved in nitrogen metabolism via ammonium assimilation. Catalyzes the ATP-dependent biosynthesis of glutamine from glutamate and ammonia. The chain is Glutamine synthetase from Phormidium lapideum.